An 81-amino-acid chain; its full sequence is Photosystem I iron-sulfur center (81 aa).

2 consecutive 4Fe-4S ferredoxin-type domains span residues 2 to 31 (AHSV…MIPW) and 39 to 68 (IASA…VRVY). [4Fe-4S] cluster contacts are provided by cysteine 11, cysteine 14, cysteine 17, cysteine 21, cysteine 48, cysteine 51, cysteine 54, and cysteine 58.

As to quaternary structure, the eukaryotic PSI reaction center is composed of at least 11 subunits. [4Fe-4S] cluster is required as a cofactor.

The protein localises to the plastid. It is found in the chloroplast thylakoid membrane. The catalysed reaction is reduced [plastocyanin] + hnu + oxidized [2Fe-2S]-[ferredoxin] = oxidized [plastocyanin] + reduced [2Fe-2S]-[ferredoxin]. In terms of biological role, apoprotein for the two 4Fe-4S centers FA and FB of photosystem I (PSI); essential for photochemical activity. FB is the terminal electron acceptor of PSI, donating electrons to ferredoxin. The C-terminus interacts with PsaA/B/D and helps assemble the protein into the PSI complex. Required for binding of PsaD and PsaE to PSI. PSI is a plastocyanin-ferredoxin oxidoreductase, converting photonic excitation into a charge separation, which transfers an electron from the donor P700 chlorophyll pair to the spectroscopically characterized acceptors A0, A1, FX, FA and FB in turn. The polypeptide is Photosystem I iron-sulfur center (Zygnema circumcarinatum (Green alga)).